Here is a 1042-residue protein sequence, read N- to C-terminus: Glutamate dehydrogenase 2 (1042 aa).

K596 is a catalytic residue. The residue at position 763 (R763) is an ADP-ribosylarginine; by Legionella Lart1.

Belongs to the Glu/Leu/Phe/Val dehydrogenases family. In terms of assembly, homodimer. (Microbial infection) ADP-ribosylated at Arg-763 by the Legionella pneumophila effector Lart1, which inhibits the glutamate dehydrogenase activity. Amoeba are natural hosts of Legionella, and ADP-ribosylation by Lart1 may promote Legionella parasitism.

The protein localises to the cytoplasm. It catalyses the reaction L-glutamate + NAD(+) + H2O = 2-oxoglutarate + NH4(+) + NADH + H(+). Its activity is regulated as follows. Activity is stimulated by AMP. (Microbial infection) Inhibited by ADP-ribosylation. In Dictyostelium discoideum (Social amoeba), this protein is Glutamate dehydrogenase 2 (glud2).